A 371-amino-acid polypeptide reads, in one-letter code: Cytochrome b (371 aa).

Helical transmembrane passes span 25–45, 69–90, 105–125, and 170–190; these read FGSM…FLAI, WIMQ…YIHI, WLSG…GYVL, and FCAL…IHII. Residues His75 and His89 each coordinate heme b. Residues His174 and His188 each coordinate heme b. His193 lines the a ubiquinone pocket. Helical transmembrane passes span 218 to 238, 280 to 300, 312 to 332, and 339 to 358; these read YKDF…LSVS, LGGT…PFTH, LSQT…WTAT, and FITI…IMNP.

It belongs to the cytochrome b family. The cytochrome bc1 complex contains 3 respiratory subunits (MT-CYB, CYC1 and UQCRFS1), 2 core proteins (UQCRC1 and UQCRC2) and probably 6 low-molecular weight proteins. It depends on heme b as a cofactor.

Its subcellular location is the mitochondrion inner membrane. Functionally, component of the ubiquinol-cytochrome c reductase complex (complex III or cytochrome b-c1 complex) that is part of the mitochondrial respiratory chain. The b-c1 complex mediates electron transfer from ubiquinol to cytochrome c. Contributes to the generation of a proton gradient across the mitochondrial membrane that is then used for ATP synthesis. This Micrurus tener microgalbineus (Spotted coral snake) protein is Cytochrome b (MT-CYB).